The primary structure comprises 775 residues: Tumor necrosis factor alpha-induced protein 3 (775 aa).

A2 carries the post-translational modification N-acetylalanine. Residues 58–300 (PQFREIIHKA…LTDPENEMKE (243 aa)) are TRAF-binding. The 172-residue stretch at 92–263 (LVALKTNGDG…SQHFVPLVTL (172 aa)) folds into the OTU domain. D100 is a catalytic residue. Residue C103 is the Nucleophile of the active site. Interaction with ubiquitin regions lie at residues 157–159 (LCY), 190–192 (SLE), and 224–227 (FAPL). The active-site Proton acceptor is the H256. An interaction with TNIP1 region spans residues 369-775 (AQNPLEPSTP…ECYQFKQMYG (407 aa)). Residues 381–416 (SLMDIKCETPNCPFFMSVNTQPLCHECSERRQKNQS) form an A20-type 1 zinc finger. The interaction with RIPK1 stretch occupies residues 386 to 445 (KCETPNCPFFMSVNTQPLCHECSERRQKNQSKLPKLNSKLGPEGLPGVGLGSSNWSPEET). Zn(2+) is bound by residues C387, C392, C404, and C407. The segment at 415-455 (QSKLPKLNSKLGPEGLPGVGLGSSNWSPEETAGGPHSAPPT) is disordered. Phosphoserine is present on S451. 2 A20-type zinc fingers span residues 464–499 (ETTA…NASH) and 500–533 (TADP…AEPS). 8 residues coordinate Zn(2+): C470, C475, C487, C490, C506, C509, C521, and C524. The span at 567-580 (TGNVSPSGCLSQAA) shows a compositional bias: polar residues. The segment at 567 to 590 (TGNVSPSGCLSQAARTPGDRAGTS) is disordered. 4 A20-type zinc fingers span residues 586–621 (RAGT…ENKQ), 636–671 (FQNN…NQRF), 695–730 (VASR…RVGS), and 741–775 (EPPK…QMYG). The interval 590-640 (SKCRKAGCMYFGTPENKGFCTLCFIEYRENKQSVTASEKAGSPAPRFQNNV) is required for proteasomal degradation of UBE2N and UBE2D3, TRAF6 deubiquitination, and TAX1BP1 interaction with UBE2N. Residues 591–775 (KCRKAGCMYF…ECYQFKQMYG (185 aa)) form a sufficient for inhibitory activity of TNF-induced NF-kappa-B activity region. Zn(2+)-binding residues include C592, C597, C609, C612, C642, C647, C659, C662, C701, C706, C718, C721, C747, C752, C764, and C767. The required for lysosomal localization and for TRAF2 lysosomal degradation stretch occupies residues 682 to 775 (RSSQHRDMPR…ECYQFKQMYG (94 aa)).

The protein belongs to the peptidase C64 family. As to quaternary structure, homodimer. Interacts with TNIP1, TAX1BP1 and TRAF2. Interacts with RNF11, ITCH and TAX1BP1 only after TNF stimulation; these interaction are transient and they are lost after 1 hour of stimulation with TNF. Interacts with YWHAZ and YWHAH. Interacts with IKBKG; the interaction is induced by TNF stimulation and by polyubiquitin. Interacts with RIPK1. Interacts with UBE2N; the interaction requires TAX1BP1. Interacts with TRAF6. As to expression, found in most tissues during development. Strikingly high levels are found in lymphoid organs, including the thymus, spleen, and gut-associated lymphoid tissue. Constitutively expressed in immature and mature thymocyte subpopulations as well as in resting peripheral T-cells; activation of these leads to down-regulation.

It is found in the cytoplasm. The protein localises to the nucleus. The protein resides in the lysosome. It carries out the reaction Thiol-dependent hydrolysis of ester, thioester, amide, peptide and isopeptide bonds formed by the C-terminal Gly of ubiquitin (a 76-residue protein attached to proteins as an intracellular targeting signal).. Its function is as follows. Ubiquitin-editing enzyme that contains both ubiquitin ligase and deubiquitinase activities. Involved in immune and inflammatory responses signaled by cytokines, such as TNF-alpha and IL-1 beta, or pathogens via Toll-like receptors (TLRs) through terminating NF-kappa-B activity. Essential component of a ubiquitin-editing protein complex, comprising also RNF11, ITCH and TAX1BP1, that ensures the transient nature of inflammatory signaling pathways. In cooperation with TAX1BP1 promotes disassembly of E2-E3 ubiquitin protein ligase complexes in IL-1R and TNFR-1 pathways; affected are at least E3 ligases TRAF6, TRAF2 and BIRC2, and E2 ubiquitin-conjugating enzymes UBE2N and UBE2D3. In cooperation with TAX1BP1 promotes ubiquitination of UBE2N and proteasomal degradation of UBE2N and UBE2D3. Upon TNF stimulation, deubiquitinates 'Lys-63'-polyubiquitin chains on RIPK1 and catalyzes the formation of 'Lys-48'-polyubiquitin chains. This leads to RIPK1 proteasomal degradation and consequently termination of the TNF- or LPS-mediated activation of NF-kappa-B. Deubiquitinates TRAF6 probably acting on 'Lys-63'-linked polyubiquitin. Upon T-cell receptor (TCR)-mediated T-cell activation, deubiquitinates 'Lys-63'-polyubiquitin chains on MALT1 thereby mediating disassociation of the CBM (CARD11:BCL10:MALT1) and IKK complexes and preventing sustained IKK activation. Deubiquitinates NEMO/IKBKG; the function is facilitated by TNIP1 and leads to inhibition of NF-kappa-B activation. Upon stimulation by bacterial peptidoglycans, probably deubiquitinates RIPK2. Can also inhibit I-kappa-B-kinase (IKK) through a non-catalytic mechanism which involves polyubiquitin; polyubiquitin promotes association with IKBKG and prevents IKK MAP3K7-mediated phosphorylation. Targets TRAF2 for lysosomal degradation. In vitro able to deubiquitinate 'Lys-11'-, 'Lys-48'- and 'Lys-63' polyubiquitin chains. Inhibitor of programmed cell death. Has a role in the function of the lymphoid system. Required for LPS-induced production of pro-inflammatory cytokines and IFN beta in LPS-tolerized macrophages. This chain is Tumor necrosis factor alpha-induced protein 3 (Tnfaip3), found in Mus musculus (Mouse).